Reading from the N-terminus, the 354-residue chain is UPF0496 protein At4g34330 (354 aa).

The next 2 helical transmembrane spans lie at 200–220 (IIFM…ATMA) and 222–242 (PHVA…GKWI). Positions 270-341 (AVQDLNNIKD…CSTDIRRART (72 aa)) form a coiled coil.

Belongs to the UPF0496 family.

The protein localises to the membrane. The polypeptide is UPF0496 protein At4g34330 (Arabidopsis thaliana (Mouse-ear cress)).